A 37-amino-acid polypeptide reads, in one-letter code: Large ribosomal subunit protein bL36 (37 aa).

The protein belongs to the bacterial ribosomal protein bL36 family.

The protein is Large ribosomal subunit protein bL36 of Aquifex aeolicus (strain VF5).